The primary structure comprises 199 residues: ATP-dependent Clp protease proteolytic subunit 2 (199 aa).

The active-site Nucleophile is S98. H123 is an active-site residue.

Belongs to the peptidase S14 family. Fourteen ClpP subunits assemble into 2 heptameric rings which stack back to back to give a disk-like structure with a central cavity, resembling the structure of eukaryotic proteasomes.

Its subcellular location is the cytoplasm. The catalysed reaction is Hydrolysis of proteins to small peptides in the presence of ATP and magnesium. alpha-casein is the usual test substrate. In the absence of ATP, only oligopeptides shorter than five residues are hydrolyzed (such as succinyl-Leu-Tyr-|-NHMec, and Leu-Tyr-Leu-|-Tyr-Trp, in which cleavage of the -Tyr-|-Leu- and -Tyr-|-Trp bonds also occurs).. Functionally, cleaves peptides in various proteins in a process that requires ATP hydrolysis. Has a chymotrypsin-like activity. Plays a major role in the degradation of misfolded proteins. The polypeptide is ATP-dependent Clp protease proteolytic subunit 2 (Corynebacterium efficiens (strain DSM 44549 / YS-314 / AJ 12310 / JCM 11189 / NBRC 100395)).